The primary structure comprises 295 residues: Geranylfarnesyl diphosphate synthase (295 aa).

Positions 51, 54, and 83 each coordinate isopentenyl diphosphate. Positions 90 and 94 each coordinate Mg(2+). An an all-trans-polyprenyl diphosphate-binding site is contributed by Arg-99. Arg-100 provides a ligand contact to isopentenyl diphosphate. Lys-174, Thr-175, and Gln-212 together coordinate an all-trans-polyprenyl diphosphate.

It belongs to the FPP/GGPP synthase family. Homodimer. Mg(2+) serves as cofactor.

It carries out the reaction isopentenyl diphosphate + (2E,6E,10E)-geranylgeranyl diphosphate = (2E,6E,10E,14E)-geranylfarnesyl diphosphate + diphosphate. In terms of biological role, involved in biosynthesis of the polyprenyl side-chain of methanophenazine, an electron carrier utilized for methanogenesis. Catalyzes the condensation of isopentenyl pyrophosphate with the allylic pyrophosphates to yield geranylfarnesyl diphosphate (GFPP). It prefers geranylgeranyl diphosphate (GGPP) and farnesyl diphosphate (FPP) as allylic substrate. The polypeptide is Geranylfarnesyl diphosphate synthase (Methanosarcina mazei (strain ATCC BAA-159 / DSM 3647 / Goe1 / Go1 / JCM 11833 / OCM 88) (Methanosarcina frisia)).